A 192-amino-acid polypeptide reads, in one-letter code: HTH-type transcriptional regulator Hpr (192 aa).

In terms of domain architecture, HTH marR-type spans 12 to 156; it reads SIIFSHKFAQ…LLSIVRHVYG (145 aa). Residues 62 to 85 constitute a DNA-binding region (H-T-H motif); it reads ISDIAKFGVMHVSTAFNFSKKLEE.

As to quaternary structure, homodimer.

Functionally, negative regulator of protease production and sporulation. The sequence is that of HTH-type transcriptional regulator Hpr from Halalkalibacterium halodurans (strain ATCC BAA-125 / DSM 18197 / FERM 7344 / JCM 9153 / C-125) (Bacillus halodurans).